Reading from the N-terminus, the 101-residue chain is Glutaredoxin-1 (101 aa).

One can recognise a Glutaredoxin domain in the interval 3–101 (DSFVQSKLRD…MMLRQIGALV (99 aa)). Cys-23 and Cys-26 form a disulfide bridge.

It belongs to the glutaredoxin family.

It is found in the cytoplasm. In terms of biological role, has a glutathione-disulfide oxidoreductase activity in the presence of NADPH and glutathione reductase. Reduces low molecular weight disulfides and proteins. The chain is Glutaredoxin-1 (GLRX) from Gallus gallus (Chicken).